The following is a 213-amino-acid chain: ATP-dependent dethiobiotin synthetase BioD (213 aa).

Residue 13 to 18 participates in ATP binding; it reads GIGKTV. Threonine 17 lines the Mg(2+) pocket. Lysine 33 is an active-site residue. A Mg(2+)-binding site is contributed by glutamate 100. Residues 100–103 and 184–186 contribute to the ATP site; these read EGAG and PHL.

Belongs to the dethiobiotin synthetase family. Homodimer. Requires Mg(2+) as cofactor.

The protein localises to the cytoplasm. It carries out the reaction (7R,8S)-7,8-diammoniononanoate + CO2 + ATP = (4R,5S)-dethiobiotin + ADP + phosphate + 3 H(+). It functions in the pathway cofactor biosynthesis; biotin biosynthesis; biotin from 7,8-diaminononanoate: step 1/2. Functionally, catalyzes a mechanistically unusual reaction, the ATP-dependent insertion of CO2 between the N7 and N8 nitrogen atoms of 7,8-diaminopelargonic acid (DAPA, also called 7,8-diammoniononanoate) to form a ureido ring. The polypeptide is ATP-dependent dethiobiotin synthetase BioD (Rhodopseudomonas palustris (strain BisA53)).